The sequence spans 218 residues: Sodium channel regulatory subunit beta-1 (218 aa).

Residues 1–18 form the signal peptide; the sequence is MGTLLALVVGAALVSSAW. Residues 19–157 lie on the Extracellular side of the membrane; it reads GGCVEVDSET…DKANRDMASI (139 aa). 2 disulfide bridges follow: Cys21–Cys43 and Cys40–Cys121. In terms of domain architecture, Ig-like C2-type spans 22–150; sequence VEVDSETEAV…KIHIEVVDKA (129 aa). N-linked (GlcNAc...) asparagine glycans are attached at residues Asn93, Asn110, Asn114, and Asn135. The helical transmembrane segment at 158–179 threads the bilayer; sequence VSEIMMYVLIVVLTIWLVAEMV. Over 180–218 the chain is Cytoplasmic; the sequence is YCYKKIAAATEAAAQENASEYLAITSESKENCTGVQVAE.

It belongs to the sodium channel auxiliary subunit SCN1B (TC 8.A.17) family. A voltage-gated sodium (Nav) channel consists of an ion-conducting pore-forming alpha subunit functional on its own that is regulated by one or more beta subunits. Interacts with SCN1A; regulatory subunit of SCN1A/Nav1.1. Interacts with SCN3A; regulatory subunit of SCN3A/Nav1.3. Interacts with SCN4A; regulatory subunit of SCN4A/Nav1.4. Interacts with SCN5A; regulatory subunit of SCN5A/Nav1.5. Interacts with SCN8A; regulatory subunit of SCN8A/Nav1.6. Interacts with SCN9A; regulatory subunit of SCN9A/Nav1.7. Interacts with SCN10A; regulatory subunit of SCN10A/Nav1.8. Interacts with NFASC. Interacts with TMEM65.

Its subcellular location is the cell membrane. It localises to the perikaryon. It is found in the cell projection. The protein resides in the axon. Regulatory subunit of multiple voltage-gated sodium (Nav) channels directly mediating the depolarization of excitable membranes. Navs, also called VGSCs (voltage-gated sodium channels) or VDSCs (voltage-dependent sodium channels), operate by switching between closed and open conformations depending on the voltage difference across the membrane. In the open conformation they allow Na(+) ions to selectively pass through the pore, along their electrochemical gradient. The influx of Na+ ions provokes membrane depolarization, initiating the propagation of electrical signals throughout cells and tissues. The accessory beta subunits participate in localization and functional modulation of the Nav channels. Modulates the activity of SCN1A/Nav1.1, SCN2A/Nav1.2, SCN3A/Nav1.3, SCN4A/Nav1.4, SCN5A/Nav1.5, SCN8A/Nav1.6, SCN9A/Nav1.7 and SCN10A/Nav1.8. The sequence is that of Sodium channel regulatory subunit beta-1 from Canis lupus familiaris (Dog).